A 399-amino-acid polypeptide reads, in one-letter code: Acetate kinase (399 aa).

Residue Asn-7 participates in Mg(2+) binding. An ATP-binding site is contributed by Lys-14. Arg-89 is a binding site for substrate. The active-site Proton donor/acceptor is the Asp-146. ATP-binding positions include 206 to 210 (HLGNG), 280 to 282 (DMR), and 328 to 332 (GIGEN). Glu-382 serves as a coordination point for Mg(2+).

The protein belongs to the acetokinase family. Homodimer. The cofactor is Mg(2+). It depends on Mn(2+) as a cofactor.

It is found in the cytoplasm. The enzyme catalyses acetate + ATP = acetyl phosphate + ADP. The protein operates within metabolic intermediate biosynthesis; acetyl-CoA biosynthesis; acetyl-CoA from acetate: step 1/2. Its function is as follows. Catalyzes the formation of acetyl phosphate from acetate and ATP. Can also catalyze the reverse reaction. The chain is Acetate kinase from Campylobacter fetus subsp. fetus (strain 82-40).